The primary structure comprises 1287 residues: Pullulanase A (1287 aa).

An N-terminal signal peptide occupies residues 1-44; the sequence is MRKTPSHTEKKMVYSIRSLKNGTGSVLIGASLVLLAMATPTISS. The interval 42 to 139 is disordered; the sequence is ISSDESTPTT…VTTETKAEEP (98 aa). Positions 48–61 are enriched in low complexity; sequence TPTTNEPNNRNTTT. The span at 79–90 shows a compositional bias: polar residues; the sequence is DISSPGNANASL. Low complexity-rich tracts occupy residues 99 to 113 and 122 to 133; these read TEPT…DPAP and EPTTSTSPVTTE. Residues 163 to 165, tryptophan 175, aspartate 221, 270 to 272, tryptophan 283, lysine 325, and asparagine 330 contribute to the substrate site; these read WTW and WYW. Ca(2+) is bound by residues serine 668 and tyrosine 670. Substrate is bound by residues 674–675 and phenylalanine 750; that span reads YD. Aspartate 785 acts as the Nucleophile in catalysis. The active-site Proton donor is the glutamate 814. Tryptophan 816 is a substrate binding site. The Ca(2+) site is built by methionine 835, threonine 838, and aspartate 839. Substrate contacts are provided by aspartate 846, arginine 849, and tyrosine 856. Residues aspartate 889 and aspartate 893 each contribute to the Ca(2+) site. Substrate contacts are provided by residues asparagine 903, lysine 976, and 996 to 998; that span reads DSY. Aspartate 999 is a binding site for Ca(2+). The segment at 1147–1255 is disordered; that stretch reads VSQNGTSHES…TPDRQAELPN (109 aa). Positions 1156 to 1203 are enriched in basic and acidic residues; the sequence is STAEEKPDSTPSKPEHQNEASHPAHQDPAPEARPDSTKPDAKVADAEN. The span at 1212–1225 shows a compositional bias: low complexity; it reads SQAEQPAQEAQASS. Residues 1228 to 1239 are compositionally biased toward basic and acidic residues; it reads EAVRKESVENSS. Positions 1253-1257 match the LPXTG sorting signal motif; that stretch reads LPNTG. The residue at position 1256 (threonine 1256) is a Pentaglycyl murein peptidoglycan amidated threonine. A propeptide spans 1257 to 1287 (removed by sortase); that stretch reads GIKNENKLLFAGISLLALLGLGFLLKNKKEN.

It belongs to the glycosyl hydrolase 13 family.

It localises to the secreted. Its subcellular location is the cell wall. It is found in the cell surface. It catalyses the reaction Hydrolysis of (1-&gt;6)-alpha-D-glucosidic linkages in pullulan, amylopectin and glycogen, and in the alpha- and beta-limit dextrins of amylopectin and glycogen.. With respect to regulation, inhibited by 4-O-alpha-D-glucopyranosylmoranoline (G1M). Its function is as follows. Virulence factor. Involved in the degradation of glycogen of the mammalian host cells. Hydrolyzes the alpha-1,6-branchpoints of glycogen. Hydrolyzes pullulan. Does not hydrolyze dextran. Binds to mouse lung alveolar type II cells that are rich in glycogen stores. Is an alpha-glucan-specific carbohydrate-binding protein, which binds to amylose (pure alpha-(1,4)-linked glucose), amylopectin (alpha-(1,4)-linked glucose with alpha-(1,6) branch points), pullulan (linear polymer of mixed alpha-(1,4)- and alpha-(1,6)-linked glucose) and glycogen (similar to amylopectin with more frequent alpha-(1,6) branch points) in vitro. Does not bind to dextran (a linear polymer of alpha-(1,6)-linked glucose). The polypeptide is Pullulanase A (Streptococcus pneumoniae).